Reading from the N-terminus, the 132-residue chain is MSRQDVQRLLEEYQVINELLATLQAQHTTVSELLEELTTALDGVRLLKTEGGERLVHIGAGLFVLGTFNAREVLTPLGAGYHAFLDLENAERILKERIDEYSKVKTSLEENIEKLIERAAQIRQVLERLGIK.

The protein belongs to the prefoldin subunit alpha family. In terms of assembly, heterohexamer of two alpha and four beta subunits.

It is found in the cytoplasm. In terms of biological role, molecular chaperone capable of stabilizing a range of proteins. Seems to fulfill an ATP-independent, HSP70-like function in archaeal de novo protein folding. The polypeptide is Prefoldin subunit alpha (Pyrobaculum islandicum (strain DSM 4184 / JCM 9189 / GEO3)).